A 410-amino-acid polypeptide reads, in one-letter code: Elongation factor Tu, chloroplastic (410 aa).

Residues Lys-10–Lys-213 enclose the tr-type G domain. The G1 stretch occupies residues Gly-19–Thr-26. Residue Gly-19–Thr-26 participates in GTP binding. Thr-26 lines the Mg(2+) pocket. Residues Gly-60–Asn-64 are G2. A G3 region spans residues Asp-81–Gly-84. GTP contacts are provided by residues Asp-81 to His-85 and Asn-136 to Asp-139. Residues Asn-136 to Asp-139 form a G4 region. The interval Ser-174–Ile-176 is G5.

The protein belongs to the TRAFAC class translation factor GTPase superfamily. Classic translation factor GTPase family. EF-Tu/EF-1A subfamily.

The protein resides in the plastid. It is found in the chloroplast. It carries out the reaction GTP + H2O = GDP + phosphate + H(+). GTP hydrolase that promotes the GTP-dependent binding of aminoacyl-tRNA to the A-site of ribosomes during protein biosynthesis. The protein is Elongation factor Tu, chloroplastic (tufA) of Codium fragile (Dead man's fingers).